The primary structure comprises 655 residues: p-hydroxybenzoic acid efflux pump subunit AaeB (655 aa).

Transmembrane regions (helical) follow at residues 13 to 33, 38 to 58, 69 to 89, 93 to 113, 121 to 141, 152 to 172, 370 to 390, 407 to 427, 431 to 451, 459 to 479, and 482 to 502; these read FAVK…HFQL, WAVL…GGEP, LRII…IAMI, LLMI…SSLV, WGLA…EPLL, EIVI…PRSI, LFWL…IAVV, FIYG…VIIP, QSML…GIEV, MGAL…TFHF, and FLDS…VILL.

The protein belongs to the aromatic acid exporter ArAE (TC 2.A.85) family.

It is found in the cell inner membrane. In terms of biological role, forms an efflux pump with AaeA. Could function as a metabolic relief valve, allowing to eliminate certain compounds when they accumulate to high levels in the cell. This chain is p-hydroxybenzoic acid efflux pump subunit AaeB, found in Shigella sonnei (strain Ss046).